Consider the following 236-residue polypeptide: 2,3,4,5-tetrahydropyridine-2,6-dicarboxylate N-acetyltransferase (236 aa).

Belongs to the transferase hexapeptide repeat family. DapH subfamily.

The catalysed reaction is (S)-2,3,4,5-tetrahydrodipicolinate + acetyl-CoA + H2O = L-2-acetamido-6-oxoheptanedioate + CoA. It functions in the pathway amino-acid biosynthesis; L-lysine biosynthesis via DAP pathway; LL-2,6-diaminopimelate from (S)-tetrahydrodipicolinate (acetylase route): step 1/3. Functionally, catalyzes the transfer of an acetyl group from acetyl-CoA to tetrahydrodipicolinate. This is 2,3,4,5-tetrahydropyridine-2,6-dicarboxylate N-acetyltransferase from Clostridium botulinum (strain Alaska E43 / Type E3).